Here is a 182-residue protein sequence, read N- to C-terminus: ATP synthase subunit delta, mitochondrial (182 aa).

The N-terminal 17 residues, 1 to 17, are a transit peptide targeting the mitochondrion; that stretch reads MFRTFGRRLVSCTLPLL.

This sequence belongs to the ATPase epsilon chain family. As to quaternary structure, F-type ATPases have 2 components, F(1) - the catalytic core - and F(o) - the membrane proton channel. F(1) has five subunits: alpha(3), beta(3), gamma(1), delta(1), epsilon(1), plus the additional subunit P18 (Tb427.05.1710) that is not present in F(1)F(o) ATP synthase from metazoa. Subunit P18 (Tb927.5.1710) interacts with the alpha subunit with a 1:1 stoichiometry; the interaction is direct. Subunit gamma is part of the central stalk. F(o) has three main subunits: a, b and c. The trypanosomal ATPase complex contains additional subunits that are not present in the F(1)F(o) ATP synthase from metazoa.

The protein resides in the mitochondrion. Its subcellular location is the mitochondrion inner membrane. Its function is as follows. Mitochondrial membrane ATP synthase (F(1)F(o) ATP synthase) produces ATP from ADP in the presence of a proton gradient across the membrane which is generated by electron transport complexes of the respiratory chain. F-type ATPases consist of two structural domains, F(1) - containing the extramembraneous catalytic core, and F(o) - containing the membrane proton channel, linked together by a central stalk and a peripheral stalk. During catalysis, ATP synthesis in the catalytic domain of F(1) is coupled via a rotary mechanism of the central stalk subunits to proton translocation. Subunits alpha and beta form the catalytic core in F(1). Rotation of the central stalk against the surrounding alpha(3)beta(3) subunits leads to hydrolysis of ATP in three separate catalytic sites on the beta subunits. Contrary to the procyclic, insect form that requires F(1)F(o) ATP synthase for ATP synthesis, the bloodstream form relies on ATP hydrolysis by F(1)F(o) ATP synthase to maintain its mitochondrial membrane potential. The chain is ATP synthase subunit delta, mitochondrial from Trypanosoma brucei brucei.